A 207-amino-acid chain; its full sequence is Cytochrome c biogenesis ATP-binding export protein CcmA (207 aa).

The ABC transporter domain maps to 4 to 207 (LEARELLCER…RISLTQTRAA (204 aa)). 36–43 (GSNGAGKT) is a binding site for ATP.

It belongs to the ABC transporter superfamily. CcmA exporter (TC 3.A.1.107) family. In terms of assembly, the complex is composed of two ATP-binding proteins (CcmA) and two transmembrane proteins (CcmB).

Its subcellular location is the cell inner membrane. The enzyme catalyses heme b(in) + ATP + H2O = heme b(out) + ADP + phosphate + H(+). In terms of biological role, part of the ABC transporter complex CcmAB involved in the biogenesis of c-type cytochromes; once thought to export heme, this seems not to be the case, but its exact role is uncertain. Responsible for energy coupling to the transport system. The protein is Cytochrome c biogenesis ATP-binding export protein CcmA of Shigella boydii serotype 4 (strain Sb227).